The following is a 775-amino-acid chain: GRIP and coiled-coil domain-containing protein 1 (775 aa).

Residues 13–61 adopt a coiled-coil conformation; it reads SKKDLLETIETQKKQLLQYQARLKDVVRAYKSLLKEKEALEASIKVLSV. Residues 84 to 93 show a composition bias toward basic and acidic residues; sequence DDRCSTHSED. Disordered stretches follow at residues 84–153 and 614–639; these read DDRC…AGGE and GLPG…SDSL. 3 stretches are compositionally biased toward low complexity: residues 94–110, 133–147, and 629–638; these read STGT…LTST, ASWS…SGDG, and DPADTSSSDS. Positions 153 to 763 form a coiled coil; the sequence is EVDKRLHQLK…PEEKQVIMRL (611 aa). The GRIP domain maps to 713–763; the sequence is QSREGANLEYLKNIIYRFLTLPDSLGRQQTLTAILTILHFSPEEKQVIMRL.

It localises to the cytoplasm. The protein resides in the golgi apparatus membrane. In terms of biological role, probably involved in maintaining Golgi structure. This Homo sapiens (Human) protein is GRIP and coiled-coil domain-containing protein 1 (GCC1).